We begin with the raw amino-acid sequence, 193 residues long: Imidazoleglycerol-phosphate dehydratase (193 aa).

Belongs to the imidazoleglycerol-phosphate dehydratase family.

It is found in the cytoplasm. It catalyses the reaction D-erythro-1-(imidazol-4-yl)glycerol 3-phosphate = 3-(imidazol-4-yl)-2-oxopropyl phosphate + H2O. The protein operates within amino-acid biosynthesis; L-histidine biosynthesis; L-histidine from 5-phospho-alpha-D-ribose 1-diphosphate: step 6/9. This Saccharolobus islandicus (strain Y.N.15.51 / Yellowstone #2) (Sulfolobus islandicus) protein is Imidazoleglycerol-phosphate dehydratase.